The sequence spans 117 residues: uncharacterized protein (117 aa).

This is an uncharacterized protein from Escherichia coli O6:H1 (strain CFT073 / ATCC 700928 / UPEC).